We begin with the raw amino-acid sequence, 250 residues long: Pyridoxine 5'-phosphate synthase (250 aa).

3-amino-2-oxopropyl phosphate contacts are provided by N8 and R19. Catalysis depends on H44, which acts as the Proton acceptor. 1-deoxy-D-xylulose 5-phosphate contacts are provided by R46 and H51. The active-site Proton acceptor is the E76. Residue T106 participates in 1-deoxy-D-xylulose 5-phosphate binding. Catalysis depends on H200, which acts as the Proton donor. 3-amino-2-oxopropyl phosphate-binding positions include D201 and 223–224 (GH).

Belongs to the PNP synthase family. In terms of assembly, homooctamer; tetramer of dimers.

It localises to the cytoplasm. It catalyses the reaction 3-amino-2-oxopropyl phosphate + 1-deoxy-D-xylulose 5-phosphate = pyridoxine 5'-phosphate + phosphate + 2 H2O + H(+). It functions in the pathway cofactor biosynthesis; pyridoxine 5'-phosphate biosynthesis; pyridoxine 5'-phosphate from D-erythrose 4-phosphate: step 5/5. In terms of biological role, catalyzes the complicated ring closure reaction between the two acyclic compounds 1-deoxy-D-xylulose-5-phosphate (DXP) and 3-amino-2-oxopropyl phosphate (1-amino-acetone-3-phosphate or AAP) to form pyridoxine 5'-phosphate (PNP) and inorganic phosphate. The protein is Pyridoxine 5'-phosphate synthase of Rhizobium meliloti (strain 1021) (Ensifer meliloti).